The primary structure comprises 746 residues: MMYQQQPKNQKQCKNIALHGYCRNSDKCEFSHELTPQQQQQQQQQQQQQQQQQQQQQQQQQQQQQQQQQQNSNGNGSNNTATSNNPIISPNSNIASPLKKSPIDNLTTSFQNLSTNQQTNHHWADHFQSGIPEYIPKQQLQQLQQQQLLQQQQQQALLLQQQQQQNYDDDQHLYPYGDNSVDDYEQHQYEPQPQPNNGIDPNMNNQFQINNFVAAQMRNASPQSYQQQFQQPNPSPQSSSQQQQQQQQQQQQAVYQQQQQQQPSSQPLAQNPSLQNNNNKLLQLQLQQHLQQIQAAQQQAQINQSYTPYPSYSQSVIRNKPGRRNIGSFFMSESLKQDILNQKSLLYLTLDPNDPRIKNIPPMLNKYHSLYPLDHDASRENQGKMFGYITSVYKAISTLDGLPYAIRRVEGFRLSSEYALQAAETWRNIQHPNIVSLKEIFVSKEFGDNSSLFFTYEFFPGSETLESKYLSQSGNPLSESVLWSFICQITSALKTIHSAGLVCRVIHPSKILLTGKNRIRMNGVGIFDVVNFDTPRILAQYQHEDLLLFGRLILTLACRSAQSTTTTNLSKSIEYVSNQYSKELYNLIVYLLTKPVINLPNIDEVVLMISGRLLQENNYLHTYTDDLETELSKEYENGRLFRLVTKLGFINERPLYDMDPRWSETGDRYLIKLFRDYIFHQVYDDGTPVLDFYHVVETLNKLDCGVDEKILLMSRDEQSLLVVSYKDLKKCIDSAFSELVSQKSHI.

A C3H1-type zinc finger spans residues 7–35; the sequence is PKNQKQCKNIALHGYCRNSDKCEFSHELT. Residues 64 to 97 show a composition bias toward low complexity; that stretch reads QQQQQQQNSNGNGSNNTATSNNPIISPNSNIASP. 3 disordered regions span residues 64–100, 169–205, and 219–275; these read QQQQQQQNSNGNGSNNTATSNNPIISPNSNIASPLKK, DDQHLYPYGDNSVDDYEQHQYEPQPQPNNGIDPNMNN, and NASP…PSLQ. The segment covering 196-205 has biased composition (polar residues); sequence NNGIDPNMNN. Positions 221-275 are enriched in low complexity; the sequence is SPQSYQQQFQQPNPSPQSSSQQQQQQQQQQQQAVYQQQQQQQPSSQPLAQNPSLQ. Residues 351–610 form a pseudokinase domain region; it reads DPNDPRIKNI…NIDEVVLMIS (260 aa). Residues Arg407, 457–464, and 509–510 contribute to the ATP site; these read EFFPGSET and SK. A coiled-coil region spans residues 611-649; sequence GRLLQENNYLHTYTDDLETELSKEYENGRLFRLVTKLGF. The tract at residues 650–746 is knob domain; it reads INERPLYDMD…SELVSQKSHI (97 aa).

This sequence belongs to the protein kinase superfamily. PAN3 family. Homodimer. Forms a heterotrimer with a catalytic subunit PAN2 to form the poly(A)-nuclease (PAN) deadenylation complex. Interacts (via PAM-2 motif) with poly(A)-binding protein (via PABC domain), conferring substrate specificity of the enzyme complex.

It localises to the cytoplasm. Regulatory subunit of the poly(A)-nuclease (PAN) deadenylation complex, one of two cytoplasmic mRNA deadenylases involved in mRNA turnover. PAN specifically shortens poly(A) tails of RNA and the activity is stimulated by poly(A)-binding protein (PABP). PAN deadenylation is followed by rapid degradation of the shortened mRNA tails by the CCR4-NOT complex. Deadenylated mRNAs are then degraded by two alternative mechanisms, namely exosome-mediated 3'-5' exonucleolytic degradation, or deadenylation-dependent mRNA decaping and subsequent 5'-3' exonucleolytic degradation by XRN1. PAN3 acts as a positive regulator for PAN activity, recruiting the catalytic subunit PAN2 to mRNA via its interaction with RNA and PABP. This is PAN2-PAN3 deadenylation complex subunit pan3 from Dictyostelium discoideum (Social amoeba).